Consider the following 221-residue polypeptide: MCPLRSLLLISTLVLLHHLPHLSLGRSLPTTTASPGRSCLDYSQNLLRAVSNTLQKARQTLEFYSCTSEEIDHEDITKDKTSTVEACLPLELATNESCLASRETSFITNGHCLASGKTSFMTTLCLRSIYEDLKMYHVEFQAMNAKLLMDPKRQIFLDQNMLAAIAELMQALNFDSETVPQKPSLKELDFYKTKVKLCILLHAFRIRAVTIDRMMSYLSSS.

Positions 1 to 25 (MCPLRSLLLISTLVLLHHLPHLSLG) are cleaved as a signal peptide. 3 disulfide bridges follow: Cys-39–Cys-112, Cys-66–Cys-198, and Cys-87–Cys-125. Asn-95 carries an N-linked (GlcNAc...) asparagine glycan.

It belongs to the IL-6 superfamily. Heterodimer with IL12B; disulfide-linked. This heterodimer is known as interleukin IL-12. Heterodimer with EBI3/IL27B; not disulfide-linked. This heterodimer is known as interleukin IL-35. Interacts with NBR1; this interaction promotes IL-12 secretion.

The protein resides in the secreted. Its function is as follows. Heterodimerizes with IL12B to form the IL-12 cytokine or with EBI3/IL27B to form the IL-35 cytokine. IL-12 is primarily produced by professional antigen-presenting cells (APCs) such as B-cells and dendritic cells (DCs) as well as macrophages and granulocytes and regulates T-cell and natural killer-cell responses, induces the production of interferon-gamma (IFN-gamma), favors the differentiation of T-helper 1 (Th1) cells and is an important link between innate resistance and adaptive immunity. Mechanistically, exerts its biological effects through a receptor composed of IL12R1 and IL12R2 subunits. Binding to the receptor results in the rapid tyrosine phosphorylation of a number of cellular substrates including the JAK family kinases TYK2 and JAK2. In turn, recruited STAT4 gets phosphorylated and translocates to the nucleus where it regulates cytokine/growth factor responsive genes. As part of IL-35, plays essential roles in maintaining the immune homeostasis of the liver microenvironment and also functions as an immune-suppressive cytokine. Mediates biological events through unconventional receptors composed of IL12RB2 and gp130/IL6ST heterodimers or homodimers. Signaling requires the transcription factors STAT1 and STAT4, which form a unique heterodimer that binds to distinct DNA sites. This chain is Interleukin-12 subunit alpha (IL12A), found in Bos taurus (Bovine).